The sequence spans 466 residues: Fez family zinc finger protein 1 (466 aa).

Positions 34–49 (PLAFSIERIMSRTPEP) match the Engrailed homology 1 repressor motif. 6 C2H2-type zinc fingers span residues 261-283 (FTCEVCGKVFNAHYNLTRHMPVH), 289-311 (FVCKICGKGFRQASTLCRHKIIH), 317-339 (HKCNQCGKAFNRSSTLNTHTRIH), 345-367 (FVCEFCGKGFHQKGNYKNHKLTH), 373-395 (FKCNICNKAFHQIYNLTFHMHTH), and 401-424 (FTCPTCGKGFCRNFDLKKHVRKLH). A disordered region spans residues 446–466 (LPNREQSHTIIQSPQLQKSVY). Polar residues predominate over residues 453-466 (HTIIQSPQLQKSVY).

This sequence belongs to the krueppel C2H2-type zinc-finger protein family.

The protein resides in the nucleus. Transcription repressor. Involved in the development of the forebrain region. This is Fez family zinc finger protein 1 (fezf1) from Xenopus laevis (African clawed frog).